The sequence spans 1241 residues: Nephrin (1241 aa).

The first 22 residues, 1 to 22 (MALGTTLRASLLLLGLLTEGLA), serve as a signal peptide directing secretion. Topologically, residues 23–1055 (QLAIPASVPR…EDQLPTEPPS (1033 aa)) are extracellular. Ig-like C2-type domains follow at residues 27–130 (PASV…VILS), 143–234 (EAGT…SFTV), 242–333 (PPVI…HGIT), 340–434 (PSAI…KSLI), 440–540 (PAQK…TQLA), and 544–635 (PPTN…ETVS). Asn40 is a glycosylation site (N-linked (GlcNAc...) asparagine). 3 cysteine pairs are disulfide-bonded: Cys53/Cys111, Cys160/Cys217, and Cys265/Cys317. Residues Asn356 and Asn401 are each glycosylated (N-linked (GlcNAc...) asparagine). Cys361 and Cys417 form a disulfide bridge. Ser432 is subject to Phosphoserine. Cys465 and Cys528 form a disulfide bridge. 6 N-linked (GlcNAc...) asparagine glycosylation sites follow: Asn547, Asn553, Asn564, Asn577, Asn680, and Asn708. Cys567 and Cys623 are disulfide-bonded. 2 Ig-like C2-type domains span residues 740 to 832 (PTIR…LLRL) and 838 to 939 (PQVE…VSIS). 2 disulfides stabilise this stretch: Cys761/Cys816 and Cys863/Cys920. N-linked (GlcNAc...) asparagine glycosylation is present at Asn908. The 96-residue stretch at 943–1038 (PPSGLKVVSL…TQLPITTPGL (96 aa)) folds into the Fibronectin type-III domain. A disordered region spans residues 1025 to 1057 (ADKGTQLPITTPGLHQPSGEPEDQLPTEPPSGP). A helical membrane pass occupies residues 1056–1076 (GPSGLPLLPVLFALGGLLLLS). Over 1077–1241 (NASCVGGVLW…LPFELRGHLV (165 aa)) the chain is Cytoplasmic. Ser1098 is subject to Phosphoserine. The segment covering 1099–1114 (EKTEAGSEEDRVRNEY) has biased composition (basic and acidic residues). Positions 1099–1137 (EKTEAGSEEDRVRNEYEESQWTGERDTQSSTVSTTEAEP) are disordered. Thr1101 is modified (phosphothreonine). The residue at position 1105 (Ser1105) is a Phosphoserine. The binds to NPHS2 stretch occupies residues 1160–1241 (RGFTGEDEDM…LPFELRGHLV (82 aa)). At Tyr1193 the chain carries Phosphotyrosine; by FYN.

It belongs to the immunoglobulin superfamily. In terms of assembly, interacts with CD2AP (via C-terminal domain). Interacts with MAGI1 (via PDZ 2 and 3 domains) forming a tripartite complex with IGSF5/JAM4. Interacts with DDN; the interaction is direct. Self-associates (via the Ig-like domains). Also interacts (via the Ig-like domains) with KIRREL1/NEPH1 and KIRREL2; the interaction with KIRREL1 is dependent on KIRREL1 glycosylation. Interacts with KIRREL3. Forms a complex with ACTN4, CASK, IQGAP1, MAGI2, SPTAN1 and SPTBN1. Interacts with NPHS2. Interacts with phosphatidylinositol 3-kinase regulatory subunit PIK3R1; the interaction is reduced by high glucose levels. In terms of processing, phosphorylated at Tyr-1193 by FYN, leading to the recruitment and activation of phospholipase C-gamma-1/PLCG1. Tyrosine phosphorylation is reduced by high glucose levels. Dephosphorylated by tensin TNS2 which leads to reduced binding of NPHN1 to PIK3R1. Specifically expressed in podocytes of kidney glomeruli.

The protein localises to the cell membrane. Seems to play a role in the development or function of the kidney glomerular filtration barrier. Regulates glomerular vascular permeability. May anchor the podocyte slit diaphragm to the actin cytoskeleton. Plays a role in skeletal muscle formation through regulation of myoblast fusion. This chain is Nephrin (NPHS1), found in Homo sapiens (Human).